A 303-amino-acid polypeptide reads, in one-letter code: Quinolinate synthase (303 aa).

Residues His24 and Ser41 each contribute to the iminosuccinate site. Position 86 (Cys86) interacts with [4Fe-4S] cluster. Iminosuccinate-binding positions include 112–114 (YVN) and Ser129. Cys172 is a binding site for [4Fe-4S] cluster. Iminosuccinate-binding positions include 198 to 200 (HPE) and Thr215. Residue Cys260 participates in [4Fe-4S] cluster binding.

It belongs to the quinolinate synthase family. Type 2 subfamily. [4Fe-4S] cluster is required as a cofactor.

It is found in the cytoplasm. It carries out the reaction iminosuccinate + dihydroxyacetone phosphate = quinolinate + phosphate + 2 H2O + H(+). The protein operates within cofactor biosynthesis; NAD(+) biosynthesis; quinolinate from iminoaspartate: step 1/1. Its function is as follows. Catalyzes the condensation of iminoaspartate with dihydroxyacetone phosphate to form quinolinate. This is Quinolinate synthase from Clostridium kluyveri (strain NBRC 12016).